A 226-amino-acid polypeptide reads, in one-letter code: Large ribosomal subunit protein uL3 (226 aa).

The interval 136-162 (NFGSQRASHGNSRSHNVPGSISMAQDP) is disordered. Positions 137–158 (FGSQRASHGNSRSHNVPGSISM) are enriched in polar residues. Residue Gln-160 is modified to N5-methylglutamine.

Belongs to the universal ribosomal protein uL3 family. In terms of assembly, part of the 50S ribosomal subunit. Forms a cluster with proteins L14 and L19. In terms of processing, methylated by PrmB.

One of the primary rRNA binding proteins, it binds directly near the 3'-end of the 23S rRNA, where it nucleates assembly of the 50S subunit. The polypeptide is Large ribosomal subunit protein uL3 (Methylibium petroleiphilum (strain ATCC BAA-1232 / LMG 22953 / PM1)).